We begin with the raw amino-acid sequence, 229 residues long: Small ribosomal subunit protein uS2c (229 aa).

The protein belongs to the universal ribosomal protein uS2 family.

It is found in the plastid. The protein resides in the chloroplast. This is Small ribosomal subunit protein uS2c (rps2) from Emiliania huxleyi (Coccolithophore).